Consider the following 501-residue polypeptide: Capsid protein (501 aa).

The interval 78-98 (SEEGFPVEPKTEEKDIPSTSG) is disordered. Positions 122–125 (KRGF) match the Nuclear localization signal motif. The CCHC-type zinc-finger motif lies at 431-448 (CKCWICHEEGHYANECPK).

Belongs to the caulimoviridae capsid protein family. In terms of assembly, interacts (via nuclear localization signal) with host importin alpha.

Its subcellular location is the virion. The protein resides in the host nucleus. Its function is as follows. Self assembles to form an icosahedral capsid, about 50 nm in diameter, nm, composed of 420 subunits of the viral capsid protein. The capsid encapsulates the genomic dsDNA. Following virus entry into host cell, provides nuclear import of the viral genome. Virus particles do not enter the nucleus, but dock at the nuclear membrane through the interaction with host importins. This Cestrum parqui (CmYLCV) protein is Capsid protein.